The primary structure comprises 433 residues: SPI-2 type 3 secretion system ATPase (433 aa).

165 to 170 serves as a coordination point for ATP; that stretch reads GVGKST.

This sequence belongs to the ATPase alpha/beta chains family. T3SS ATPase subfamily. In terms of assembly, the core secretion machinery of the T3SS is composed of approximately 20 different proteins, including cytoplasmic components, a base, an export apparatus and a needle. This subunit is part of the cytosolic complex. Forms homohexamers. Forms a complex with SsaK/SctL (stator protein) and SsaQ/SctQ (the major sorting platform component). Interacts with the T3SS-2 specific chaperones SsaE, SseA, SscA, SscB, and SrcA.

The protein localises to the cytoplasm. The enzyme catalyses ATP + H2O + cellular proteinSide 1 = ADP + phosphate + cellular proteinSide 2.. ATPase component of the type III secretion system (T3SS), also called injectisome, which is used to inject bacterial effector proteins into eukaryotic host cells. Acts as a molecular motor to provide the energy that is required for the export of proteins. Required for type III secretion apparatus (T3SA) formation, secretion of a subset of SPI-2 effectors and virulence. May play a critical role in T3SS substrate recognition, disassembly of the effector/chaperone complex and unfolding of the effector in an ATP-dependent manner prior to secretion. Releases the effector protein SseB from the T3SS-2 specific chaperone SsaE in an ATP-dependent manner. The chain is SPI-2 type 3 secretion system ATPase from Salmonella typhimurium (strain LT2 / SGSC1412 / ATCC 700720).